The chain runs to 88 residues: Putative membrane protein insertion efficiency factor (88 aa).

Belongs to the UPF0161 family.

The protein localises to the cell inner membrane. In terms of biological role, could be involved in insertion of integral membrane proteins into the membrane. This is Putative membrane protein insertion efficiency factor from Rickettsia canadensis (strain McKiel).